A 467-amino-acid polypeptide reads, in one-letter code: Iroquois-class homeodomain protein irx-1-A (467 aa).

The segment at residues D126–N188 is a DNA-binding region (homeobox; TALE-type). 3 disordered regions span residues K197–S306, T318–A344, and S410–A467. Acidic residues-rich tracts occupy residues E215–I225 and N233–E244. Basic and acidic residues predominate over residues K245–E262. Positions K415–P431 are enriched in basic and acidic residues. The segment covering R447–I460 has biased composition (polar residues).

It belongs to the TALE/IRO homeobox family. In terms of tissue distribution, expressed early in neural differentiation in the neural plate, and expression continues in the neural tube after neural fold closure. Expressed in the presumptive midbrain territory. Also expressed in the prospective neural crest and the preplacodal field, anterior to the neural plate. Strongly expressed in the profundal placode and weakly expressed in the trigeminal placode. Also expressed in the mesoderm in the Spemann organizer from the start of gastrulation, and subsequently in its derivatives; namely in the notochord as well as in the somites of stage 25 embryos, and the somites and notochord of tailbud embryos. Also expressed in specific and overlapping dynamic patterns with irx2 and irx3 during pronephric kidney development. Renal expression begins in the dorsal region of the pronephric anlage at mid neurula stage and continues to at least tailbud stages where expression is confined to the intermediate tubule segment IT1. Renal expression is maintained at tadpole stages.

The protein localises to the nucleus. Its function is as follows. Acts partially redundantly with other irx members in neural patterning. Required for formation of the posterior forebrain, midbrain, hindbrain, and to a lesser extent, spinal cord. Acts early in neural plate development to induce expression of some but not all proneural genes, and specify a neural precursor state. Also up-regulates repressors that prevent neuronal differentiation. Patterns the neuroectoderm in both the anterior/posterior and dorsal/ventral axes. Acts primarily as a transcriptional repressor during neural development, and binds to the bmp4 promoter to repress gene expression and thus mediate down-regulation of bmp4 by wnt signaling. Controls multiple processes through bmp4-repression including neural plate development, neural crest specification and Spemann organizer development. Involved in the specification of the preplacodal field at the anterior border of the neural plate. Regulates the genetic cascade of interactions that are necessary for positioning the isthmus organizer and the formation of the midbrain-hindbrain boundary. Required during at least two stages of pronephros kidney development; during neurula stages, maintains transcription of key renal genes to define the size and identity of the pronephric anlage, probably in part through regulation of bmp-signaling. Subsequently required for proper formation of the intermediate tubule segment of the pronephros. Acts principally as a transcriptional activator during pronephros development. The sequence is that of Iroquois-class homeodomain protein irx-1-A (irx1-a) from Xenopus laevis (African clawed frog).